The following is a 426-amino-acid chain: Histidine--tRNA ligase (426 aa).

The protein belongs to the class-II aminoacyl-tRNA synthetase family. As to quaternary structure, homodimer.

The protein resides in the cytoplasm. It carries out the reaction tRNA(His) + L-histidine + ATP = L-histidyl-tRNA(His) + AMP + diphosphate + H(+). This Streptococcus pyogenes serotype M18 (strain MGAS8232) protein is Histidine--tRNA ligase.